The chain runs to 287 residues: Membrane protein insertase YidC 2 (287 aa).

An N-terminal signal peptide occupies residues 1-26; it reads MKKKKRFKQKLLIASLVIGLVAVLSG. Cysteine 27 carries N-palmitoyl cysteine lipidation. The S-diacylglycerol cysteine moiety is linked to residue cysteine 27. A run of 5 helical transmembrane segments spans residues 65–85, 135–155, 178–198, 207–224, and 228–250; these read YAVG…PLMI, MMGC…YQAI, YILP…SMMG, AMIV…GITL, and LALY…NNPF.

The protein belongs to the OXA1/ALB3/YidC family. Type 2 subfamily.

It localises to the cell membrane. Required for the insertion and/or proper folding and/or complex formation of integral membrane proteins into the membrane. Involved in integration of membrane proteins that insert both dependently and independently of the Sec translocase complex, as well as at least some lipoproteins. This is Membrane protein insertase YidC 2 from Listeria innocua serovar 6a (strain ATCC BAA-680 / CLIP 11262).